Reading from the N-terminus, the 209-residue chain is Uracil phosphoribosyltransferase (209 aa).

5-phospho-alpha-D-ribose 1-diphosphate is bound by residues Arg-79, Arg-104, and 131–139; that span reads DPMLATGGS. Uracil is bound by residues Ile-194 and 199–201; that span reads GDA. Position 200 (Asp-200) interacts with 5-phospho-alpha-D-ribose 1-diphosphate.

The protein belongs to the UPRTase family. As to quaternary structure, homodimer. Mg(2+) serves as cofactor.

The catalysed reaction is UMP + diphosphate = 5-phospho-alpha-D-ribose 1-diphosphate + uracil. The protein operates within pyrimidine metabolism; UMP biosynthesis via salvage pathway; UMP from uracil: step 1/1. With respect to regulation, allosterically activated by GTP. In terms of biological role, catalyzes the conversion of uracil and 5-phospho-alpha-D-ribose 1-diphosphate (PRPP) to UMP and diphosphate. The polypeptide is Uracil phosphoribosyltransferase (Bacillus caldolyticus).